Consider the following 766-residue polypeptide: Serine/threonine-protein kinase DCLK2 (766 aa).

The tract at residues M1–I45 is disordered. Basic and acidic residues predominate over residues I7–P19. Over residues R24 to P39 the composition is skewed to low complexity. T61 carries the phosphothreonine modification. Doublecortin domains are found at residues K72–T158 and K197–D280. 2 stretches are compositionally biased toward low complexity: residues A300–S312 and T324–S347. The segment at A300–G378 is disordered. Phosphoserine is present on S362. The 258-residue stretch at Y394–V651 folds into the Protein kinase domain. ATP contacts are provided by residues I400 to V408 and K423. Catalysis depends on D515, which acts as the Proton acceptor. At S647 the chain carries Phosphoserine. T666 carries the phosphothreonine modification. Residues C707–D766 form a disordered region. The span at S724–P736 shows a compositional bias: low complexity. Pro residues predominate over residues A737–A752.

It belongs to the protein kinase superfamily. CAMK Ser/Thr protein kinase family. CaMK subfamily. Binds to and stabilizes microtubules. Interacts with MAPK8IP1/JIP-1, MAPK8IP2/JIP-2, MAPK9/JNK2, PPP1R9B/NEURABIN-2 and actin. Autophosphorylated. In terms of tissue distribution, expressed in the brain, heart and eyes.

The protein resides in the cytoplasm. It is found in the cytoskeleton. The catalysed reaction is L-seryl-[protein] + ATP = O-phospho-L-seryl-[protein] + ADP + H(+). It carries out the reaction L-threonyl-[protein] + ATP = O-phospho-L-threonyl-[protein] + ADP + H(+). In terms of biological role, protein kinase with a significantly reduced C(a2+)/CAM affinity and dependence compared to other members of the CaMK family. May play a role in the down-regulation of CRE-dependent gene activation probably by phosphorylation of the CREB coactivator CRTC2/TORC2 and the resulting retention of TORC2 in the cytoplasm. The polypeptide is Serine/threonine-protein kinase DCLK2 (DCLK2) (Homo sapiens (Human)).